The chain runs to 300 residues: Putative glycosyltransferase ORF300 (300 aa).

This sequence belongs to the glycosyltransferase group 1 family. Glycosyltransferase 4 subfamily.

The polypeptide is Putative glycosyltransferase ORF300 (Acidianus hospitalis (AFV-1)).